The sequence spans 418 residues: Serine/threonine-protein kinase Sgk1 (418 aa).

Residues proline 50–proline 78 form a disordered region. Polar residues predominate over residues glutamine 68–proline 78. One can recognise a Protein kinase domain in the interval phenylalanine 85 to phenylalanine 342. ATP is bound by residues isoleucine 91 to valine 99 and lysine 114. Aspartate 209 functions as the Proton acceptor in the catalytic mechanism. Positions serine 343–leucine 418 constitute an AGC-kinase C-terminal domain.

The protein belongs to the protein kinase superfamily. AGC Ser/Thr protein kinase family.

It is found in the cytoplasm. The protein resides in the nucleus. It localises to the endoplasmic reticulum. It carries out the reaction L-seryl-[protein] + ATP = O-phospho-L-seryl-[protein] + ADP + H(+). It catalyses the reaction L-threonyl-[protein] + ATP = O-phospho-L-threonyl-[protein] + ADP + H(+). In terms of biological role, protein kinase that may play an important role in cellular stress response. Plays an important role in activating certain potassium, sodium, and chloride channels, suggesting an involvement in the regulation of processes such as cell survival, neuronal excitability, and renal sodium excretion. This Xenopus tropicalis (Western clawed frog) protein is Serine/threonine-protein kinase Sgk1 (sgk1).